The primary structure comprises 173 residues: Myosin light chain 5 (173 aa).

Positions methionine 1–asparagine 22 are disordered. 3 EF-hand domains span residues threonine 30 to threonine 65, aspartate 100 to lysine 135, and methionine 136 to lysine 171. Ca(2+)-binding residues include aspartate 43, asparagine 45, aspartate 47, and aspartate 54.

As to quaternary structure, myosin is a hexamer of 2 heavy chains and 4 light chains. As to expression, jaw-closing muscles.

This is Myosin light chain 5 (MYL5) from Felis catus (Cat).